Consider the following 212-residue polypeptide: uncharacterized protein (212 aa).

3 residues coordinate S-adenosyl-L-methionine: G53, E74, and D97.

Belongs to the methyltransferase superfamily. YrrT family.

In terms of biological role, could be a S-adenosyl-L-methionine-dependent methyltransferase. This is an uncharacterized protein from Bacillus mycoides (strain KBAB4) (Bacillus weihenstephanensis).